A 212-amino-acid chain; its full sequence is MERLLVLARHGQSEWNLKKLFTGWRDPELTELGIDEARRAGRWLKSQGTQFDVAFTSNLRRAQHTCSLILEEMGQGGLETIRNEALNERDYGDLSGLNKDDARERWGDAQVHEWRRSYDVPPPGGESLKDTAARVLPYYIQTILPRVMSGERVLVAAHGNSLRALVMVLDGMTTKTIASLEIATGIPLVYRLKADTTVESKTVLDKDIDQDD.

Substrate-binding positions include 9 to 16 (RHGQSEWN), 22 to 23 (TG), R61, 88 to 91 (ERDY), K99, 115 to 116 (RR), and 159 to 160 (GN). H10 (tele-phosphohistidine intermediate) is an active-site residue. E88 serves as the catalytic Proton donor/acceptor.

The protein belongs to the phosphoglycerate mutase family. BPG-dependent PGAM subfamily. Homodimer.

It catalyses the reaction (2R)-2-phosphoglycerate = (2R)-3-phosphoglycerate. It functions in the pathway carbohydrate degradation; glycolysis; pyruvate from D-glyceraldehyde 3-phosphate: step 3/5. Its function is as follows. Catalyzes the interconversion of 2-phosphoglycerate and 3-phosphoglycerate. The protein is 2,3-bisphosphoglycerate-dependent phosphoglycerate mutase of Methylorubrum extorquens (strain CM4 / NCIMB 13688) (Methylobacterium extorquens).